Here is a 475-residue protein sequence, read N- to C-terminus: BICD family-like cargo adapter 2 (475 aa).

Positions 56–275 (ELGKALLERN…LKELQDELHM (220 aa)) form a coiled coil. Composition is skewed to polar residues over residues 286–300 (HSSL…TAVQ) and 308–318 (SAETQSITSGY). Residues 286–318 (HSSLHSEIQQSTAVQNHEKGRNSAETQSITSGY) form a disordered region. Residues 340 to 413 (RLQDQVTMQH…ESLNLQLLST (74 aa)) are a coiled coil. Residues 440-450 (QSQKQQETQKP) show a composition bias toward low complexity. The disordered stretch occupies residues 440–459 (QSQKQQETQKPPESPQNSFL).

It belongs to the BICDR family.

This is BICD family-like cargo adapter 2 (bicdl2) from Xenopus tropicalis (Western clawed frog).